The following is a 414-amino-acid chain: Histidine--tRNA ligase (414 aa).

This sequence belongs to the class-II aminoacyl-tRNA synthetase family. In terms of assembly, homodimer.

It localises to the cytoplasm. It catalyses the reaction tRNA(His) + L-histidine + ATP = L-histidyl-tRNA(His) + AMP + diphosphate + H(+). The polypeptide is Histidine--tRNA ligase (hisS) (Mycoplasma genitalium (strain ATCC 33530 / DSM 19775 / NCTC 10195 / G37) (Mycoplasmoides genitalium)).